The following is a 54-amino-acid chain: Defensin-like protein (54 aa).

Position 1 is a pyrrolidone carboxylic acid (Gln1). Intrachain disulfides connect Cys4–Cys52, Cys16–Cys37, Cys22–Cys47, and Cys26–Cys49.

The protein belongs to the DEFL family. Monomer.

The protein resides in the secreted. Its function is as follows. Taste-modifying protein; sweet-tasting. It is 2000 sweeter than sucrose on a molar basis. Functionally, has a pH-specific antimicrobial activity against bacteria (B.subtilis, E.coli and S.aureus) and the fungus C.albicans. This chain is Defensin-like protein, found in Pentadiplandra brazzeana.